Here is a 79-residue protein sequence, read N- to C-terminus: Polcalcin Bra r 1 (79 aa).

2 consecutive EF-hand domains span residues 1 to 36 (MADA…LGSV) and 39 to 71 (DDVT…NPGL). D14, D16, D18, K20, E25, D49, D51, D53, N55, and E60 together coordinate Ca(2+).

The sequence is that of Polcalcin Bra r 1 from Brassica campestris (Field mustard).